The following is a 708-amino-acid chain: Exocyst complex component 5 (708 aa).

The residue at position 2 (Ala-2) is an N-acetylalanine. Residues 40–101 are a coiled coil; sequence KRLLEEFVNH…AFQHFQELDE (62 aa). A phosphothreonine mark is found at Thr-122, Thr-395, and Thr-405. Position 412 is a phosphoserine (Ser-412).

The protein belongs to the SEC10 family. The exocyst complex is composed of EXOC1, EXOC2, EXOC3, EXOC4, EXOC5, EXOC6, EXOC7 and EXOC8. Interacts with EXOC3L1. In terms of tissue distribution, ubiquitous.

The protein localises to the cytoplasm. The protein resides in the midbody. In terms of biological role, component of the exocyst complex involved in the docking of exocytic vesicles with fusion sites on the plasma membrane. The chain is Exocyst complex component 5 (Exoc5) from Rattus norvegicus (Rat).